A 921-amino-acid chain; its full sequence is Isoleucine--tRNA ligase (921 aa).

Positions 57 to 67 (PYANGELHMGH) match the 'HIGH' region motif. L-isoleucyl-5'-AMP is bound at residue Glu552. The short motif at 593-597 (KMSKS) is the 'KMSKS' region element. Residue Lys596 coordinates ATP. The Zn(2+) site is built by Cys888, Cys891, Cys908, and Cys911.

It belongs to the class-I aminoacyl-tRNA synthetase family. IleS type 1 subfamily. In terms of assembly, monomer. It depends on Zn(2+) as a cofactor.

It localises to the cytoplasm. It catalyses the reaction tRNA(Ile) + L-isoleucine + ATP = L-isoleucyl-tRNA(Ile) + AMP + diphosphate. Catalyzes the attachment of isoleucine to tRNA(Ile). As IleRS can inadvertently accommodate and process structurally similar amino acids such as valine, to avoid such errors it has two additional distinct tRNA(Ile)-dependent editing activities. One activity is designated as 'pretransfer' editing and involves the hydrolysis of activated Val-AMP. The other activity is designated 'posttransfer' editing and involves deacylation of mischarged Val-tRNA(Ile). This chain is Isoleucine--tRNA ligase, found in Listeria monocytogenes serovar 1/2a (strain ATCC BAA-679 / EGD-e).